Here is a 186-residue protein sequence, read N- to C-terminus: ADP-ribosylation factor-like protein alp41 (186 aa).

A lipid anchor (N-myristoyl glycine) is attached at Gly2. Residues 23–30, 66–70, and 125–128 each bind GTP; these read GLDNAGKT, DIGGQ, and NKSD.

It belongs to the small GTPase superfamily. Arf family.

It is found in the cytoplasm. Its subcellular location is the cytoskeleton. Has a role in the cofactor-dependent pathway of microtubule biogenesis. Required for growth polarity control. The protein is ADP-ribosylation factor-like protein alp41 (alp41) of Schizosaccharomyces pombe (strain 972 / ATCC 24843) (Fission yeast).